The following is a 22-amino-acid chain: GLWEKIREKANELVSGIVEGVK.

Lys-22 carries the lysine amide modification.

Expressed by the skin parotoid and/or rostral glands.

It localises to the secreted. Functionally, antibacterial peptide, that adopts an alpha helical conformation which can disrupt bacterial membranes. Each caerin displays a different antimicrobial specificity. This Ranoidea caerulea (Green tree frog) protein is Caerin-3.4.